Consider the following 353-residue polypeptide: Phosphoribosylformylglycinamidine cyclo-ligase (353 aa).

The protein belongs to the AIR synthase family.

Its subcellular location is the cytoplasm. The catalysed reaction is 2-formamido-N(1)-(5-O-phospho-beta-D-ribosyl)acetamidine + ATP = 5-amino-1-(5-phospho-beta-D-ribosyl)imidazole + ADP + phosphate + H(+). The protein operates within purine metabolism; IMP biosynthesis via de novo pathway; 5-amino-1-(5-phospho-D-ribosyl)imidazole from N(2)-formyl-N(1)-(5-phospho-D-ribosyl)glycinamide: step 2/2. This Symbiobacterium thermophilum (strain DSM 24528 / JCM 14929 / IAM 14863 / T) protein is Phosphoribosylformylglycinamidine cyclo-ligase.